A 588-amino-acid chain; its full sequence is Protein kintoun (588 aa).

3 disordered regions span residues 199–223 (PGYE…PENS), 338–498 (PPLE…SSQE), and 510–535 (AANV…ADED). The segment covering 202-212 (EAKEPPEERDL) has biased composition (basic and acidic residues). Residues 350–361 (PNPTSDPQNENQ) show a composition bias toward polar residues. 2 stretches are compositionally biased toward basic and acidic residues: residues 362 to 382 (TRVE…HQRG) and 393 to 433 (QVLE…KFEL). The span at 435 to 447 (DVQQENKGNCSNT) shows a compositional bias: polar residues. Residues 448 to 460 (KEVKCCRRTKDSL) are compositionally biased toward basic and acidic residues.

Belongs to the PIH1 family. Kintoun subfamily.

The protein resides in the cytoplasm. It is found in the dynein axonemal particle. Its function is as follows. Required for cytoplasmic pre-assembly of axonemal dyneins, thereby playing a central role in motility in cilia and flagella. Involved in pre-assembly of dynein arm complexes in the cytoplasm before intraflagellar transport loads them for the ciliary compartment. This is Protein kintoun from Oryzias latipes (Japanese rice fish).